Reading from the N-terminus, the 217-residue chain is Pyridoxine/pyridoxamine 5'-phosphate oxidase (217 aa).

Substrate is bound by residues 13-16 and Lys71; that span reads RREY. FMN is bound by residues 66–71, 81–82, Arg87, Lys88, and Gln110; these read RTVLLK and YT. Substrate contacts are provided by Tyr128, Arg132, and Ser136. FMN contacts are provided by residues 145–146 and Trp190; that span reads QS. 196-198 contributes to the substrate binding site; the sequence is RLH. Arg200 contacts FMN.

It belongs to the pyridoxamine 5'-phosphate oxidase family. Homodimer. It depends on FMN as a cofactor.

The catalysed reaction is pyridoxamine 5'-phosphate + O2 + H2O = pyridoxal 5'-phosphate + H2O2 + NH4(+). It catalyses the reaction pyridoxine 5'-phosphate + O2 = pyridoxal 5'-phosphate + H2O2. It functions in the pathway cofactor metabolism; pyridoxal 5'-phosphate salvage; pyridoxal 5'-phosphate from pyridoxamine 5'-phosphate: step 1/1. It participates in cofactor metabolism; pyridoxal 5'-phosphate salvage; pyridoxal 5'-phosphate from pyridoxine 5'-phosphate: step 1/1. In terms of biological role, catalyzes the oxidation of either pyridoxine 5'-phosphate (PNP) or pyridoxamine 5'-phosphate (PMP) into pyridoxal 5'-phosphate (PLP). The polypeptide is Pyridoxine/pyridoxamine 5'-phosphate oxidase (Rubrobacter xylanophilus (strain DSM 9941 / JCM 11954 / NBRC 16129 / PRD-1)).